The following is a 780-amino-acid chain: Cullin-5 (780 aa).

A Phosphoserine modification is found at Ser-34. Phosphothreonine is present on Thr-210. Positions 713 to 772 (LRTRKLYIQIMKMRKKISNAQLQTELVEILKNMFLPQKKMIKEQIEWLIEHKYIRRDESD) constitute a Cullin neddylation domain. Residue Lys-724 forms a Glycyl lysine isopeptide (Lys-Gly) (interchain with G-Cter in NEDD8) linkage.

The protein belongs to the cullin family. As to quaternary structure, component of multiple cullin-5-RING E3 ubiquitin-protein ligase complexes (ECS complexes, also named CRL5 complexes) formed of CUL5, Elongin BC (ELOB and ELOC), RNF7/RBX2 and a variable SOCS box domain-containing protein as substrate-specific recognition component. CUL5-containing ECS complexes specifically contain RNF7/RBX2, and not RBX1, as catalytic subunit. Component of the ECS(ASB2) complex with the substrate recognition component ASB2. Component of the ECS(ASB6) complex with the substrate recognition component ASB6. Component of the ECS(ASB7) complex with the substrate recognition component ASB7. Component of the ECS(ASB9) complex with the substrate recognition component ASB9. Component of the ECS(ASB11) complex with the substrate recognition component ASB11. Component of the ECS(ASB12) complex with the substrate recognition component ASB12. Component of the ECS(LRRC41) complex with the substrate recognition component LRRC41. Component of the ECS(SOCS1) complex with the substrate recognition component SOCS1. Component of the ECS(SOCS2) complex with the substrate recognition component SOCS2. Component of the ECS(WSB1) complex with the substrate recognition subunit WSB1. Component of the ECS(SOCS3) complex with the substrate recognition component SOCS3. Component of the ECS(SOCS7) complex with the substrate recognition component SOCS7. Component of the ECS(SPSB1) complex with the substrate recognition component SPSB1. Component of the ECS(SPSB3) complex with the substrate recognition component SPSB3. Component of the ECS(SPSB2) complex with the substrate recognition component SPSB2. Component of the ECS(SPSB4) complex with the substrate recognition component SPSB4. Component of the ECS(RAB40) complex with the substrate recognition subunit RAB40A, RAB40B or RAB40C. Component of the ECS(KLHDC1) complex with the substrate recognition component KLHDC1. Component of the ECS(PCMTD1) complex with the substrate recognition subunit PCMTD1. May also form complexes containing RBX1 and ELOA or VHL; additional evidence is however required to confirm this result in vivo. Interacts (when neddylated) with ARIH2; leading to activate the E3 ligase activity of ARIH2. Interacts with ERCC6; the interaction is induced by DNA damaging agents or inhibitors of RNA polymerase II elongation. Interacts with ELOA (via the BC-box). Interacts (unneddylated form) with DCUN1D1, DCUN1D2, DCUN1D3, DCUN1D4 and DCUN1D5; these interactions promote the cullin neddylation. In terms of processing, neddylated; which enhances the ubiquitination activity of ECS complexes and prevents binding of the inhibitor CAND1. Deneddylated via its interaction with the COP9 signalosome (CSN). As to expression, kidney collecting tubules.

It is found in the nucleus. It participates in protein modification; protein ubiquitination. Core component of multiple cullin-5-RING E3 ubiquitin-protein ligase complexes (ECS complexes, also named CRL5 complexes), which mediate the ubiquitination and subsequent proteasomal degradation of target proteins. Acts a scaffold protein that contributes to catalysis through positioning of the substrate and the ubiquitin-conjugating enzyme. The functional specificity of the E3 ubiquitin-protein ligase complex depends on the variable SOCS box-containing substrate recognition component. Acts as a key regulator of neuron positioning during cortex development: component of various SOCS-containing ECS complexes, such as the ECS(SOCS7) complex, that regulate reelin signaling by mediating ubiquitination and degradation of DAB1. ECS(SOCS1) seems to direct ubiquitination of JAK2. The ECS(SOCS2) complex mediates the ubiquitination and subsequent proteasomal degradation of phosphorylated EPOR and GHR. The ECS(SPSB3) complex catalyzes ubiquitination of nuclear CGAS. ECS(KLHDC1) complex is part of the DesCEND (destruction via C-end degrons) pathway and mediates ubiquitination and degradation of truncated SELENOS selenoprotein produced by failed UGA/Sec decoding, which ends with a glycine. The ECS(ASB9) complex mediates ubiquitination and degradation of CKB. As part of some ECS complex, promotes 'Lys-11'-linked ubiquitination and degradation of BTRC. As part of a multisubunit ECS complex, polyubiquitinates monoubiquitinated POLR2A. As part of the ECS(RAB40C) complex, mediates ANKRD28 ubiquitination and degradation, thereby regulating protein phosphatase 6 (PP6) complex activity and focal adhesion assembly during cell migration. As part of the ECS(RAB40A) complex, mediates RHOU 'Lys-48'-linked ubiquitination and degradation, thus inhibiting focal adhesion disassembly during cell migration. As part of the ECS(RAB40B) complex, mediates LIMA1/EPLIN and RAP2 ubiquitination, thereby regulating actin cytoskeleton dynamics and stress fiber formation during cell migration. May form a cell surface vasopressin receptor. This chain is Cullin-5 (CUL5), found in Oryctolagus cuniculus (Rabbit).